We begin with the raw amino-acid sequence, 150 residues long: CCAAT/enhancer-binding protein gamma (150 aa).

A Glycyl lysine isopeptide (Lys-Gly) (interchain with G-Cter in SUMO2) cross-link involves residue K3. Residues 27–94 are disordered; sequence GLQQVPQLVP…QKAQDTLQRV (68 aa). Residues 28–37 are compositionally biased toward low complexity; the sequence is LQQVPQLVPA. The segment covering 56-72 has biased composition (basic and acidic residues); the sequence is SPMDRNSDEYRQRRERN. The region spanning 62 to 125 is the bZIP domain; it reads SDEYRQRRER…SVLKDLFLEH (64 aa). Positions 66-93 are basic motif; the sequence is RQRRERNNMAVKKSRLKSKQKAQDTLQR. A leucine-zipper region spans residues 97–118; sequence LKEENERLEAKIKLLTKELSVL.

Belongs to the bZIP family. C/EBP subfamily. Binds DNA as a dimer and can form stable heterodimers with CEBPA and CEBPB. Interacts with ZNF638; this interaction increases transcriptional activation.

The protein localises to the nucleus. Functionally, transcription factor that binds to the promoter and the enhancer regions of target genes. Binds to the promoter and the enhancer of the alpha-1-fetoprotein gene. Binds to the enhancer element PRE-I (positive regulatory element-I) of the IL-4 gene. Binds to the promoter and the enhancer of the immunoglobulin heavy chain. Binds to GPE1, a cis-acting element in the G-CSF gene promoter. This chain is CCAAT/enhancer-binding protein gamma (Cebpg), found in Rattus norvegicus (Rat).